The following is a 142-amino-acid chain: Profilin (142 aa).

Belongs to the profilin family. As to quaternary structure, occurs in many kinds of cells as a complex with monomeric actin in a 1:1 ratio. As to expression, expressed specifically in coelomocytes in response to injury.

The protein localises to the cytoplasm. It localises to the cytoskeleton. Its function is as follows. Binds to actin and affects the structure of the cytoskeleton. At high concentrations, profilin prevents the polymerization of actin, whereas it enhances it at low concentrations. By binding to PIP2, it inhibits the formation of IP3 and DG. This chain is Profilin, found in Strongylocentrotus purpuratus (Purple sea urchin).